Consider the following 116-residue polypeptide: Protein Rev (116 aa).

Serine 5 and serine 8 each carry phosphoserine; by host CK2. The segment at 18–26 (IIKHLYQSN) is homomultimerization. Residues 20 to 48 (KHLYQSNPPPKPEGTRQARRNRRRRWRER) form a disordered region. Residues 34 to 50 (TRQARRNRRRRWRERQR) carry the Nuclear localization signal and RNA-binding (RRE) motif. Basic residues predominate over residues 36-48 (QARRNRRRRWRER). Residues 73-84 (LQLPPLERLTLD) carry the Nuclear export signal and binding to XPO1 motif. Residues 91-116 (TSGTQGVGSPQILVESPAVLESGTKE) are disordered. Residues serine 92 and serine 99 each carry the phosphoserine; by host modification.

This sequence belongs to the HIV-1 REV protein family. As to quaternary structure, homomultimer; when bound to the RRE. Multimeric assembly is essential for activity and may involve XPO1. Binds to human KPNB1, XPO1, TNPO1, RANBP5 and IPO7. Interacts with the viral Integrase. Interacts with human KHDRBS1. Interacts with human NAP1; this interaction decreases Rev multimerization and stimulates its activity. Interacts with human DEAD-box helicases DDX3 and DDX24; these interactions may serve for viral RNA export to the cytoplasm and packaging, respectively. Interacts with human PSIP1; this interaction may inhibit HIV-1 DNA integration by promoting dissociation of the Integrase-LEDGF/p75 complex. Asymmetrically arginine dimethylated at one site by host PRMT6. Methylation impairs the RNA-binding activity and export of viral RNA from the nucleus to the cytoplasm. In terms of processing, phosphorylated by protein kinase CK2. Presence of, and maybe binding to the N-terminus of the regulatory beta subunit of CK2 is necessary for CK2-mediated Rev's phosphorylation.

It localises to the host nucleus. Its subcellular location is the host nucleolus. It is found in the host cytoplasm. Functionally, escorts unspliced or incompletely spliced viral pre-mRNAs (late transcripts) out of the nucleus of infected cells. These pre-mRNAs carry a recognition sequence called Rev responsive element (RRE) located in the env gene, that is not present in fully spliced viral mRNAs (early transcripts). This function is essential since most viral proteins are translated from unspliced or partially spliced pre-mRNAs which cannot exit the nucleus by the pathway used by fully processed cellular mRNAs. Rev itself is translated from a fully spliced mRNA that readily exits the nucleus. Rev's nuclear localization signal (NLS) binds directly to KPNB1/Importin beta-1 without previous binding to KPNA1/Importin alpha-1. KPNB1 binds to the GDP bound form of RAN (Ran-GDP) and targets Rev to the nucleus. In the nucleus, the conversion from Ran-GDP to Ran-GTP dissociates Rev from KPNB1 and allows Rev's binding to the RRE in viral pre-mRNAs. Rev multimerization on the RRE via cooperative assembly exposes its nuclear export signal (NES) to the surface. Rev can then form a complex with XPO1/CRM1 and Ran-GTP, leading to nuclear export of the complex. Conversion from Ran-GTP to Ran-GDP mediates dissociation of the Rev/RRE/XPO1/RAN complex, so that Rev can return to the nucleus for a subsequent round of export. Beside KPNB1, also seems to interact with TNPO1/Transportin-1, RANBP5/IPO5 and IPO7/RANBP7 for nuclear import. The nucleoporin-like HRB/RIP is an essential cofactor that probably indirectly interacts with Rev to release HIV RNAs from the perinuclear region to the cytoplasm. The protein is Protein Rev of Human immunodeficiency virus type 1 group M subtype B (isolate CDC-451) (HIV-1).